The sequence spans 124 residues: Autophagy-related protein 8 (124 aa).

Gly116 is lipidated: Phosphatidylethanolamine amidated glycine. The propeptide at Gly117–Lys124 is removed in mature form.

It belongs to the ATG8 family. In terms of assembly, conjugation to phosphatidylethanolamine (PE) leads to homodimerization. Interacts with ATG1, ATG3, ATG4, ATG7 and ATG12. In terms of processing, the C-terminal 8 residues of ATG8 are removed by ATG4 to expose Gly-116 at the C-terminus. This Gly-116 forms then a thioester bond with the 'Cys-550' of ATG7 (E1-like activating enzyme) before being transferred to the 'Cys-244' of ATG3 (the specific E2 conjugating enzyme), in order to be finally amidated with phosphatidylethanolamine. This lipid modification anchors ATG8 to membranes and can be reversed by ATG4, releasing soluble ATG8.

It localises to the cytoplasmic vesicle. The protein localises to the cvt vesicle membrane. Its subcellular location is the autophagosome membrane. It is found in the vacuole membrane. Its function is as follows. Ubiquitin-like modifier involved in cytoplasm to vacuole transport (Cvt) vesicles and autophagosome formation. With ATG4, mediates the delivery of the vesicles and autophagosomes to the vacuole via the microtubule cytoskeleton. Required for selective autophagic degradation of the nucleus (nucleophagy) as well as for mitophagy which contributes to regulate mitochondrial quantity and quality by eliminating the mitochondria to a basal level to fulfill cellular energy requirements and preventing excess ROS production. Also participates in membrane fusion events that take place in the early secretory pathway. Also involved in endoplasmic reticulum-specific autophagic process and is essential for the survival of cells subjected to severe ER stress. The ATG8-PE conjugate mediates tethering between adjacent membranes and stimulates membrane hemifusion, leading to expansion of the autophagosomal membrane during autophagy. Moreover not only conjugation, but also subsequent ATG8-PE deconjugation is an important step required to facilitate multiple events during macroautophagy, and especially for efficient autophagosome biogenesis, the assembly of ATG9-containing tubulovesicular clusters into phagophores/autophagosomes, and for the disassembly of PAS-associated ATG components. In Kluyveromyces marxianus (strain DMKU3-1042 / BCC 29191 / NBRC 104275) (Yeast), this protein is Autophagy-related protein 8.